We begin with the raw amino-acid sequence, 473 residues long: Cytochrome P450 716A2 (473 aa).

Residues 1–21 form a helical membrane-spanning segment; the sequence is MYLTIIFLFISSIIFPLLFFL. Cys420 contributes to the heme binding site.

It belongs to the cytochrome P450 family. The cofactor is heme.

Its subcellular location is the membrane. Its function is as follows. Possesses triterpene oxidizing activity. Catalyzes the C28 hydroxylation of alpha-amyrin, beta-amyrin, and lupeol, producing uvaol, erythrodiol, and betulin, respectively. Catalyzes the C28 carboxylation of alpha- and beta-amyrin. Possesses 22alpha-hydroxylation activity against alpha- and beta-amaryn. In Arabidopsis thaliana (Mouse-ear cress), this protein is Cytochrome P450 716A2.